Here is a 231-residue protein sequence, read N- to C-terminus: Uracil-DNA glycosylase (231 aa).

The active-site Proton acceptor is the Asp70.

This sequence belongs to the uracil-DNA glycosylase (UDG) superfamily. UNG family.

The protein localises to the cytoplasm. The enzyme catalyses Hydrolyzes single-stranded DNA or mismatched double-stranded DNA and polynucleotides, releasing free uracil.. Functionally, excises uracil residues from the DNA which can arise as a result of misincorporation of dUMP residues by DNA polymerase or due to deamination of cytosine. This chain is Uracil-DNA glycosylase, found in Pseudomonas fluorescens (strain Pf0-1).